The sequence spans 176 residues: Protein Dr1 (176 aa).

At A2 the chain carries N-acetylalanine. The 64-residue stretch at 12–75 folds into the Histone-fold domain; sequence TIPRAAINKM…ISPEHVIQAL (64 aa). The Nuclear localization signal motif lies at 100 to 103; it reads KRRK. A phosphoserine mark is found at S105, S106, S166, and S167. Over residues 152-167 the composition is skewed to low complexity; that stretch reads QLAAASASASNQAGSS. Residues 152-176 form a disordered region; it reads QLAAASASASNQAGSSQDEEDDDDI.

It belongs to the NC2 beta/DR1 family. In terms of assembly, heterodimer with DRAP1. DR1 exists in solution as a homotetramer that dissociates during interaction with TBP and then, after complexing with TBP, reassociates at a slow rate, to reconstitute the tetramer. Interacts with NFIL3. Component of the ADA2A-containing complex (ATAC), composed of KAT14, KAT2A, TADA2L, TADA3L, ZZ3, MBIP, WDR5, YEATS2, CCDC101 and DR1. Post-translationally, phosphorylation regulates its interaction with TBP. Not phosphorylated when bound to DRAP1.

The protein resides in the nucleus. Its function is as follows. The association of the DR1/DRAP1 heterodimer with TBP results in a functional repression of both activated and basal transcription of class II genes. This interaction precludes the formation of a transcription-competent complex by inhibiting the association of TFIIA and/or TFIIB with TBP. Can bind to DNA on its own. Component of the ATAC complex, a complex with histone acetyltransferase activity on histones H3 and H4. The chain is Protein Dr1 (DR1) from Homo sapiens (Human).